Here is a 671-residue protein sequence, read N- to C-terminus: Kinesin-like protein KIF2C (671 aa).

Positions 1–200 (MIDFDDVAAI…CHPLTMTDPI (200 aa)) are globular. The tract at residues 36-62 (KQKRRSVNSKIPAPKESLRTRSTRMST) is disordered. Ser-41 is subject to Phosphoserine; by AURKB. Residues 44–47 (SKIP) carry the Microtubule tip localization signal motif. Phosphoserine occurs at positions 52, 57, 61, 112, 121, 133, and 138. The tract at residues 153–184 (EKKAQNSEMRMKRAQEYDSSFPNWEFARMIKE) is negative regulator of microtubule-binding. Intrachain disulfides connect Cys-191/Cys-233 and Cys-290/Cys-506. The region spanning 204 to 534 (RICVCVRKRP…LRYADRVKEL (331 aa)) is the Kinesin motor domain. Position 294–301 (294–301 (GQTGSGKT)) interacts with ATP. A phosphoserine mark is found at Ser-465, Ser-567, and Ser-579. Residues 564 to 604 (GNLSKEEEELSSQMSSFNEAMTQIRELEERAVEELKEIIQQ) are a coiled coil.

This sequence belongs to the TRAFAC class myosin-kinesin ATPase superfamily. Kinesin family. MCAK/KIF2 subfamily. In terms of assembly, interacts with CENPH. Interacts with MTUS2/TIP150; the interaction is direct. Interacts with MAPRE1; the interaction is direct, regulated by phosphorylation and is probably required for targeting to growing microtubule plus ends. Interacts with KIF18B at microtubule tips; this interaction increases the affinity of both partners for microtubule plus ends and is required for robust microtubule depolymerization. Phosphorylation by AURKA or AURKB strongly reduces KIF18B-binding. Post-translationally, phosphorylation by AURKB, regulates association with centromeres and kinetochores and the microtubule depolymerization activity. In terms of processing, ubiquitinated.

The protein localises to the cytoplasm. Its subcellular location is the cytoskeleton. It localises to the nucleus. The protein resides in the chromosome. It is found in the centromere. The protein localises to the kinetochore. In complex with KIF18B, constitutes the major microtubule plus-end depolymerizing activity in mitotic cells. Regulates the turnover of microtubules at the kinetochore and functions in chromosome segregation during mitosis. Plays a role in chromosome congression and is required for the lateral to end-on conversion of the chromosome-microtubule attachment. The protein is Kinesin-like protein KIF2C (KIF2C) of Macaca fascicularis (Crab-eating macaque).